The chain runs to 566 residues: KsdD-like steroid dehydrogenase MT0809 (566 aa).

23–54 lines the FAD pocket; the sequence is DAIVVGAGLAGLVAACELADRGLRVLILDQEN.

The protein belongs to the FAD-dependent oxidoreductase 2 family. Requires FAD as cofactor.

It functions in the pathway lipid metabolism; steroid biosynthesis. Able to catalyze the elimination of the C-1 and C-2 hydrogen atoms of the A-ring from the polycyclic ring structure of 3-ketosteroids. This Mycobacterium tuberculosis (strain CDC 1551 / Oshkosh) protein is KsdD-like steroid dehydrogenase MT0809.